We begin with the raw amino-acid sequence, 150 residues long: MVKGSVTNTSSIVKQFEKSSIKHETETIAFAKQFINECIREFQEQKDNVVEEKNTDQNHQNQNQEGVIIEIYQELLQKVDLISSELRQNLSSLQLRFQEVERDTGHDLLNVLNSLSQEARLAQKVLEEDGSQQGSQLIQGLLTCFQSTGN.

Serine 11 carries the phosphoserine modification.

As to quaternary structure, component of linear elements (LinEs), which are similar to synaptonemal complexes, at least composed of rec27, rec25, rec10 and mug20. Interacts with rec10; the interaction is direct.

It is found in the cytoplasm. The protein resides in the nucleus. It localises to the chromosome. During meiotic DNA recombination, binds to and may help activate DNA double-strand break (DSB) hotspot sites. The chain is Linear element protein rec25 from Schizosaccharomyces pombe (strain 972 / ATCC 24843) (Fission yeast).